The following is a 151-amino-acid chain: Mediator of RNA polymerase II transcription subunit 32 (151 aa).

The tract at residues 128–151 (GVAPGSVHSSSTGFDSRFSEDSTQ) is disordered.

It belongs to the mediator complex subunit 32 family. Oligomers. Component of the Mediator complex. Interacts with MED6. Interacts with GEBPL.

It localises to the nucleus. Its function is as follows. Component of the Mediator complex, a coactivator involved in the regulated transcription of nearly all RNA polymerase II-dependent genes. Mediator functions as a bridge to convey information from gene-specific regulatory proteins to the basal RNA polymerase II transcription machinery. The Mediator complex, having a compact conformation in its free form, is recruited to promoters by direct interactions with regulatory proteins and serves for the assembly of a functional pre-initiation complex with RNA polymerase II and the general transcription factors. The protein is Mediator of RNA polymerase II transcription subunit 32 (MED32) of Arabidopsis thaliana (Mouse-ear cress).